The following is a 470-amino-acid chain: Neuraminidase (470 aa).

The Intravirion segment spans residues 1–6; sequence MNPNQK. The helical transmembrane segment at 7-27 threads the bilayer; sequence IITIGSISIAIGIISLMLQIG. The segment at 11–33 is involved in apical transport and lipid raft association; the sequence is GSISIAIGIISLMLQIGNIISIW. The Virion surface portion of the chain corresponds to 28–470; sequence NIISIWASHS…GAELPFTIDK (443 aa). The tract at residues 36-90 is hypervariable stalk region; it reads HSIQTGSQNHTGICNQRIITYENSTWVNHTYVNINNTNVVAGKDKTSVTLAGNSS. 5 N-linked (GlcNAc...) asparagine; by host glycosylation sites follow: Asn-44, Asn-58, Asn-63, Asn-70, and Asn-88. A head of neuraminidase region spans residues 91-470; it reads LCSISGWAIY…GAELPFTIDK (380 aa). Intrachain disulfides connect Cys-92/Cys-417, Cys-124/Cys-129, Cys-184/Cys-231, Cys-233/Cys-238, Cys-279/Cys-292, Cys-281/Cys-290, Cys-318/Cys-335, and Cys-421/Cys-447. A substrate-binding site is contributed by Arg-118. Asn-146 carries an N-linked (GlcNAc...) asparagine; by host glycan. Residue Asp-151 is the Proton donor/acceptor of the active site. Arg-152 is a binding site for substrate. An N-linked (GlcNAc...) asparagine; by host glycan is attached at Asn-235. Residue 277-278 participates in substrate binding; the sequence is EE. Arg-293 is a binding site for substrate. 3 residues coordinate Ca(2+): Asp-294, Gly-298, and Asp-324. Residue Arg-368 participates in substrate binding. Catalysis depends on Tyr-402, which acts as the Nucleophile. Residues Asn-434 and Asn-455 are each glycosylated (N-linked (GlcNAc...) asparagine; by host).

It belongs to the glycosyl hydrolase 34 family. Homotetramer. It depends on Ca(2+) as a cofactor. N-glycosylated.

The protein localises to the virion membrane. It localises to the host apical cell membrane. It catalyses the reaction Hydrolysis of alpha-(2-&gt;3)-, alpha-(2-&gt;6)-, alpha-(2-&gt;8)- glycosidic linkages of terminal sialic acid residues in oligosaccharides, glycoproteins, glycolipids, colominic acid and synthetic substrates.. With respect to regulation, inhibited by the neuraminidase inhibitors zanamivir (Relenza) and oseltamivir (Tamiflu). These drugs interfere with the release of progeny virus from infected cells and are effective against all influenza strains. Resistance to neuraminidase inhibitors is quite rare. Catalyzes the removal of terminal sialic acid residues from viral and cellular glycoconjugates. Cleaves off the terminal sialic acids on the glycosylated HA during virus budding to facilitate virus release. Additionally helps virus spread through the circulation by further removing sialic acids from the cell surface. These cleavages prevent self-aggregation and ensure the efficient spread of the progeny virus from cell to cell. Otherwise, infection would be limited to one round of replication. Described as a receptor-destroying enzyme because it cleaves a terminal sialic acid from the cellular receptors. May facilitate viral invasion of the upper airways by cleaving the sialic acid moieties on the mucin of the airway epithelial cells. Likely to plays a role in the budding process through its association with lipid rafts during intracellular transport. May additionally display a raft-association independent effect on budding. Plays a role in the determination of host range restriction on replication and virulence. Sialidase activity in late endosome/lysosome traffic seems to enhance virus replication. The polypeptide is Neuraminidase (Aves (Human)).